The following is a 556-amino-acid chain: Formate--tetrahydrofolate ligase (556 aa).

Position 65-72 (65-72 (TPAGEGKS)) interacts with ATP.

This sequence belongs to the formate--tetrahydrofolate ligase family.

It carries out the reaction (6S)-5,6,7,8-tetrahydrofolate + formate + ATP = (6R)-10-formyltetrahydrofolate + ADP + phosphate. The protein operates within one-carbon metabolism; tetrahydrofolate interconversion. This Streptococcus agalactiae serotype V (strain ATCC BAA-611 / 2603 V/R) protein is Formate--tetrahydrofolate ligase.